The chain runs to 656 residues: Chaperone protein HtpG (656 aa).

The interval 1–364 (MSEQNPTDSK…SADLPLNVSR (364 aa)) is a; substrate-binding. The tract at residues 365 to 583 (EILQESRDVK…EGELSPQMIQ (219 aa)) is b. Residues 584–656 (MLKQMGQDVP…LRRVNELLMK (73 aa)) form a c region.

It belongs to the heat shock protein 90 family. In terms of assembly, homodimer.

The protein resides in the cytoplasm. Its function is as follows. Molecular chaperone. Has ATPase activity. The protein is Chaperone protein HtpG of Psychrobacter arcticus (strain DSM 17307 / VKM B-2377 / 273-4).